The sequence spans 305 residues: Acetyl-coenzyme A carboxylase carboxyl transferase subunit beta (305 aa).

Positions 25–293 (LWVQCPACQQ…LPKVESVASL (269 aa)) constitute a CoA carboxyltransferase N-terminal domain. 4 residues coordinate Zn(2+): C29, C32, C48, and C51. The segment at 29–51 (CPACQQMIFARDLEKNQRVCTHC) adopts a C4-type zinc-finger fold.

This sequence belongs to the AccD/PCCB family. Acetyl-CoA carboxylase is a heterohexamer composed of biotin carboxyl carrier protein (AccB), biotin carboxylase (AccC) and two subunits each of ACCase subunit alpha (AccA) and ACCase subunit beta (AccD). It depends on Zn(2+) as a cofactor.

Its subcellular location is the cytoplasm. It catalyses the reaction N(6)-carboxybiotinyl-L-lysyl-[protein] + acetyl-CoA = N(6)-biotinyl-L-lysyl-[protein] + malonyl-CoA. Its pathway is lipid metabolism; malonyl-CoA biosynthesis; malonyl-CoA from acetyl-CoA: step 1/1. In terms of biological role, component of the acetyl coenzyme A carboxylase (ACC) complex. Biotin carboxylase (BC) catalyzes the carboxylation of biotin on its carrier protein (BCCP) and then the CO(2) group is transferred by the transcarboxylase to acetyl-CoA to form malonyl-CoA. This Granulibacter bethesdensis (strain ATCC BAA-1260 / CGDNIH1) protein is Acetyl-coenzyme A carboxylase carboxyl transferase subunit beta.